Reading from the N-terminus, the 361-residue chain is Chorismate synthase (361 aa).

The NADP(+) site is built by Arg48 and Arg54. FMN contacts are provided by residues Arg125 to Ser127, Asn238 to Ala239, Gly278, Lys293 to Ser297, and Arg319.

The protein belongs to the chorismate synthase family. Homotetramer. It depends on FMNH2 as a cofactor.

It carries out the reaction 5-O-(1-carboxyvinyl)-3-phosphoshikimate = chorismate + phosphate. The protein operates within metabolic intermediate biosynthesis; chorismate biosynthesis; chorismate from D-erythrose 4-phosphate and phosphoenolpyruvate: step 7/7. Its function is as follows. Catalyzes the anti-1,4-elimination of the C-3 phosphate and the C-6 proR hydrogen from 5-enolpyruvylshikimate-3-phosphate (EPSP) to yield chorismate, which is the branch point compound that serves as the starting substrate for the three terminal pathways of aromatic amino acid biosynthesis. This reaction introduces a second double bond into the aromatic ring system. The protein is Chorismate synthase of Salmonella typhi.